Consider the following 107-residue polypeptide: MGKIRKNDTVVVLSGDDKGKQGAVLELIPAKKAAIVKGVNIKTKHRKPSNKNTSGEIITFEAPILLSKLALVAKKATKDKPAIPTRVGFKIENKKKIRIAKKTGKAI.

The protein belongs to the universal ribosomal protein uL24 family. In terms of assembly, part of the 50S ribosomal subunit.

Its function is as follows. One of two assembly initiator proteins, it binds directly to the 5'-end of the 23S rRNA, where it nucleates assembly of the 50S subunit. In terms of biological role, one of the proteins that surrounds the polypeptide exit tunnel on the outside of the subunit. The protein is Large ribosomal subunit protein uL24 of Mesomycoplasma hyopneumoniae (strain J / ATCC 25934 / NCTC 10110) (Mycoplasma hyopneumoniae).